Here is a 155-residue protein sequence, read N- to C-terminus: 6,7-dimethyl-8-ribityllumazine synthase (155 aa).

Residues Trp-23, 57–59, and 81–83 contribute to the 5-amino-6-(D-ribitylamino)uracil site; these read AWE and CVI. Residue 86-87 participates in (2S)-2-hydroxy-3-oxobutyl phosphate binding; that stretch reads DT. His-89 acts as the Proton donor in catalysis. Asn-114 contributes to the 5-amino-6-(D-ribitylamino)uracil binding site. Residue Arg-128 coordinates (2S)-2-hydroxy-3-oxobutyl phosphate.

The protein belongs to the DMRL synthase family. In terms of assembly, forms an icosahedral capsid composed of 60 subunits, arranged as a dodecamer of pentamers.

The enzyme catalyses (2S)-2-hydroxy-3-oxobutyl phosphate + 5-amino-6-(D-ribitylamino)uracil = 6,7-dimethyl-8-(1-D-ribityl)lumazine + phosphate + 2 H2O + H(+). It functions in the pathway cofactor biosynthesis; riboflavin biosynthesis; riboflavin from 2-hydroxy-3-oxobutyl phosphate and 5-amino-6-(D-ribitylamino)uracil: step 1/2. In terms of biological role, catalyzes the formation of 6,7-dimethyl-8-ribityllumazine by condensation of 5-amino-6-(D-ribitylamino)uracil with 3,4-dihydroxy-2-butanone 4-phosphate. This is the penultimate step in the biosynthesis of riboflavin. This Stenotrophomonas maltophilia (strain R551-3) protein is 6,7-dimethyl-8-ribityllumazine synthase.